Here is a 228-residue protein sequence, read N- to C-terminus: Ribosomal RNA small subunit methyltransferase G (228 aa).

Residues Gly-70, Ala-121 to Glu-122, and Arg-138 each bind S-adenosyl-L-methionine.

The protein belongs to the methyltransferase superfamily. RNA methyltransferase RsmG family.

It is found in the cytoplasm. In terms of biological role, specifically methylates the N7 position of a guanine in 16S rRNA. This chain is Ribosomal RNA small subunit methyltransferase G, found in Thermotoga petrophila (strain ATCC BAA-488 / DSM 13995 / JCM 10881 / RKU-1).